The following is a 441-amino-acid chain: Peroxisomal multifunctional enzyme A (441 aa).

A 3-hydroxyacyl-CoA dehydrogenase region spans residues 1–302 (MALNFKDKVV…VNSKPADGES (302 aa)). Residues 11-35 (IVTG…AKVV), Ile19, Asp38, 73-74 (SV), and Asn97 each bind NAD(+). Ser149 is a substrate binding site. Catalysis depends on Tyr162, which acts as the Proton acceptor. Residues 162-166 (YGSMK) and 194-197 (AASR) contribute to the NAD(+) site. Residues 331–440 (ASKIFTTIQG…KLGALMQGSK (110 aa)) enclose the SCP2 domain. Residue Gln412 coordinates substrate.

Belongs to the short-chain dehydrogenases/reductases (SDR) family.

It localises to the peroxisome. The catalysed reaction is a (3S)-3-hydroxyacyl-CoA + NAD(+) = a 3-oxoacyl-CoA + NADH + H(+). It participates in lipid metabolism; fatty acid beta-oxidation. Its function is as follows. Enzyme acting on the peroxisomal beta-oxidation pathway for fatty acids. Protects the cells from the increase of the harmful xenobiotic fatty acids incorporated from their diets and optimizes cellular lipid composition for proper development. The chain is Peroxisomal multifunctional enzyme A (mfeA) from Dictyostelium discoideum (Social amoeba).